We begin with the raw amino-acid sequence, 270 residues long: NAD kinase (270 aa).

Aspartate 49 (proton acceptor) is an active-site residue. NAD(+) is bound by residues aspartate 49–glycine 50, arginine 54, asparagine 126–glutamate 127, arginine 152, aspartate 154, threonine 165–serine 170, alanine 189, and glutamine 227.

It belongs to the NAD kinase family. A divalent metal cation is required as a cofactor.

The protein resides in the cytoplasm. The enzyme catalyses NAD(+) + ATP = ADP + NADP(+) + H(+). Functionally, involved in the regulation of the intracellular balance of NAD and NADP, and is a key enzyme in the biosynthesis of NADP. Catalyzes specifically the phosphorylation on 2'-hydroxyl of the adenosine moiety of NAD to yield NADP. This chain is NAD kinase, found in Lactococcus lactis subsp. cremoris (strain MG1363).